The sequence spans 293 residues: tRNA pseudouridine synthase A (293 aa).

The active-site Nucleophile is aspartate 60. Tyrosine 118 provides a ligand contact to substrate.

This sequence belongs to the tRNA pseudouridine synthase TruA family. In terms of assembly, homodimer.

It carries out the reaction uridine(38/39/40) in tRNA = pseudouridine(38/39/40) in tRNA. Formation of pseudouridine at positions 38, 39 and 40 in the anticodon stem and loop of transfer RNAs. The sequence is that of tRNA pseudouridine synthase A from Rippkaea orientalis (strain PCC 8801 / RF-1) (Cyanothece sp. (strain PCC 8801)).